The chain runs to 424 residues: Appressorium protein ROW1 (424 aa).

Residues 1–21 (MTKLTLTVALVSALLASGASA) form the signal peptide. 4 disordered regions span residues 19–54 (ASAQQPTGTGNGPDPRATTDLNRNQPTKSWTQWQPK), 69–90 (ANRIESGEGGQPGGEPQSGYNT), 278–304 (SGSTFRQGDPVTPPAHPAPSSSQCSSV), and 327–398 (SSSA…TQGA). Residues 22 to 403 (QQPTGTGNGP…NTQGAASSAS (382 aa)) are Extracellular-facing. Positions 37-54 (TDLNRNQPTKSWTQWQPK) are enriched in polar residues. Composition is skewed to low complexity over residues 295-304 (APSSSQCSSV) and 327-347 (SSSAASSAATDSSASTNSASS). Positions 362–382 (SGTGSGSGSGSGSGSGSGSGS) are enriched in gly residues. Residues 383–398 (SSGSSSSGSSSNTQGA) show a composition bias toward low complexity. Residues 404-424 (SLTISVGLAGLVAIGAAAFAL) traverse the membrane as a helical segment.

Its subcellular location is the cell membrane. It is found in the secreted. Its function is as follows. Plays a role in the formation of the appressorium, a specialized infection structure with the purpose of penetrating the host surface, and is required for proper remodeling of the appressorium wall and vesicle secretion. This Mycosarcoma maydis (Corn smut fungus) protein is Appressorium protein ROW1.